Here is a 400-residue protein sequence, read N- to C-terminus: MVDCGVDIYQLPVVPRACRSPRGRRLKIMRKQRSEFEVLAQVAGRFSGERKNRIVIGSLAHETKETKDDNVVVNNFLETMEVEVKPQPGLENLSQVLLSKDWLALGPSMPNSPITQEENFDSRSKIDSKRKVSHLKERGSCISQESQNMYPLKKRKLFYQNHSSESHDTPCTVKFGIKSLNISELLVDVPESATVGSLKLAVLEAVTQILKGGLNIGVLFQGKTIVDDSKTLLQIGIPYDDDDDENLGSLGFMLEPQKSETTTITTFTTVSPRTRLRQNQVLGSVDSTEAVAAKSVVPVRMKPAWQPEMVQRRIRRPFTVSEVEALVQAVERLGTGRWRDVKSHAFNHVNHRTYVDLKDKWKTLVHTAKISARQRRGEPVPQDLLDRVLAAHAFWSDRTG.

The 80-residue stretch at 173–252 (VKFGIKSLNI…DDENLGSLGF (80 aa)) folds into the Ubiquitin-like domain. The 60-residue stretch at 310-369 (VQRRIRRPFTVSEVEALVQAVERLGTGRWRDVKSHAFNHVNHRTYVDLKDKWKTLVHTAK) folds into the HTH myb-type domain. Residues 338-365 (WRDVKSHAFNHVNHRTYVDLKDKWKTLV) constitute a DNA-binding region (H-T-H motif).

Homodimer. As to expression, expressed ubiquitously.

The protein resides in the nucleus. In terms of biological role, binds specifically to the plant telomeric double-stranded DNA sequences. At least 4 repeats of telomeric sequences are required for binding. This Arabidopsis thaliana (Mouse-ear cress) protein is Telomere repeat-binding protein 6 (TRP6).